Here is a 325-residue protein sequence, read N- to C-terminus: Olfactory receptor 1S1 (325 aa).

At methionine 1 to asparagine 38 the chain is on the extracellular side. The N-linked (GlcNAc...) asparagine glycan is linked to asparagine 18. The helical transmembrane segment at leucine 39–isoleucine 62 threads the bilayer. Residues serine 63–threonine 70 lie on the Cytoplasmic side of the membrane. A helical membrane pass occupies residues proline 71 to proline 92. Residues lysine 93–glutamine 113 are Extracellular-facing. Cysteine 110 and cysteine 202 are oxidised to a cystine. The helical transmembrane segment at methionine 114 to tyrosine 133 threads the bilayer. Residues aspartate 134 to arginine 152 are Cytoplasmic-facing. A helical transmembrane segment spans residues phenylalanine 153–threonine 171. Residues histidine 172–asparagine 208 lie on the Extracellular side of the membrane. Residues glutamate 209–valine 232 form a helical membrane-spanning segment. Residues cysteine 233 to lysine 249 lie on the Cytoplasmic side of the membrane. A helical transmembrane segment spans residues alanine 250–tyrosine 272. Residues phenylalanine 273–lysine 285 are Extracellular-facing. Residues isoleucine 286 to leucine 305 traverse the membrane as a helical segment. Residues arginine 306 to leucine 325 lie on the Cytoplasmic side of the membrane.

Belongs to the G-protein coupled receptor 1 family.

The protein localises to the cell membrane. In terms of biological role, odorant receptor. This chain is Olfactory receptor 1S1 (OR1S1), found in Homo sapiens (Human).